The chain runs to 67 residues: MGTLPVMVLFGLSFPPAFFALLAALPLFWLLRRLLQPSGLYDMIWHPALFNCALYGCLFYLVSWLFI.

Transmembrane regions (helical) follow at residues 8 to 28 (VLFG…LPLF) and 47 to 67 (PALF…WLFI).

The protein belongs to the AaeX family.

Its subcellular location is the cell membrane. The sequence is that of Protein AaeX from Edwardsiella piscicida.